Here is a 388-residue protein sequence, read N- to C-terminus: Nesprin-4 (388 aa).

At Met1–Pro339 the chain is on the cytoplasmic side. The segment at Glu60–Asp92 is disordered. Positions Ser78–Asp92 are enriched in basic and acidic residues. Residues Val331–Ile388 enclose the KASH domain. A helical; Anchor for type IV membrane protein membrane pass occupies residues Leu340–Leu360. The Perinuclear space segment spans residues Ser361–Ile388.

This sequence belongs to the nesprin family. Core component of LINC complexes which are composed of inner nuclear membrane SUN domain-containing proteins coupled to outer nuclear membrane KASH domain-containing nesprins. SUN and KASH domain-containing proteins seem to bind each other promiscuously; however, differentially expression of LINC complex constituents can give rise to specific assemblies. Probably part of a SUN1-containing LINC complex. Interacts with kinesins KIF5B and KLC1. In terms of processing, the disulfid bond with SUN1 or SUN2 is required for stability of the respective LINC complex under tensile forces. As to expression, expressed in secretory epithelial cells, such as those found in exocrine pancreas, bulbourethral gland, mammary gland and salivary gland (at protein level). Also expressed in the cochlea, where it is restricted primarily to the 3 rows of outer hair cells and 1 row of inner hair cells (at protein level). Not detected in other cells of the cochlea, including Deiter's cells and pillar cells, nor in liver and kidney (at protein level).

The protein localises to the nucleus outer membrane. Its function is as follows. As a component of the LINC (LInker of Nucleoskeleton and Cytoskeleton) complex, involved in the connection between the nuclear lamina and the cytoskeleton. The nucleocytoplasmic interactions established by the LINC complex play an important role in the transmission of mechanical forces across the nuclear envelope and in nuclear movement and positioning. Behaves as a kinesin cargo, providing a functional binding site for kinesin-1 at the nuclear envelope. Hence may contribute to the establishment of secretory epithelial morphology, by promoting kinesin-dependent apical migration of the centrosome and Golgi apparatus and basal localization of the nucleus. The protein is Nesprin-4 (Syne4) of Mus musculus (Mouse).